A 216-amino-acid chain; its full sequence is ATP phosphoribosyltransferase (216 aa).

It belongs to the ATP phosphoribosyltransferase family. Short subfamily. In terms of assembly, heteromultimer composed of HisG and HisZ subunits.

The protein resides in the cytoplasm. The catalysed reaction is 1-(5-phospho-beta-D-ribosyl)-ATP + diphosphate = 5-phospho-alpha-D-ribose 1-diphosphate + ATP. It functions in the pathway amino-acid biosynthesis; L-histidine biosynthesis; L-histidine from 5-phospho-alpha-D-ribose 1-diphosphate: step 1/9. In terms of biological role, catalyzes the condensation of ATP and 5-phosphoribose 1-diphosphate to form N'-(5'-phosphoribosyl)-ATP (PR-ATP). Has a crucial role in the pathway because the rate of histidine biosynthesis seems to be controlled primarily by regulation of HisG enzymatic activity. The chain is ATP phosphoribosyltransferase from Synechococcus sp. (strain CC9902).